A 324-amino-acid polypeptide reads, in one-letter code: MSATIASLRESLCSETTPLPIRFRALFSLKHLAVQNKGTADSLSAIDAIAAAFASPSALLKHELAYCLGQTGSDAAIPHLTQVLEDLQEDPMCRHEAAEALGALGKAESLGVLQKYLHREGEDVSVKETCEIAIDRIEWENSEERKQEKLRQSDFASVDPAPPMPEDDEKQTVETLEKKLLDTSLPLFKRYRAMFALRDLASPPDLPTAVPAILALAKGLKDESALFRHEIAFVFGQLSHPASIPALTEALSNLDEVSMVRHEAAEALGSLGDEEGVEETLLKFLHDKEKVVRESVIVALDMAEFEQSGQAEYALIPEVASKAS.

HEAT-like PBS-type repeat units lie at residues 60-86 (LKHE…VLED) and 94-119 (RHEA…YLHR). Fe cation contacts are provided by H62, E63, H95, and E96. Over residues 143–152 (EERKQEKLRQ) the composition is skewed to basic and acidic residues. The tract at residues 143 to 171 (EERKQEKLRQSDFASVDPAPPMPEDDEKQ) is disordered. HEAT-like PBS-type repeat units lie at residues 189–219 (KRYR…LAKG), 227–253 (FRHE…ALSN), and 260–287 (VRHE…FLHD). Fe cation-binding residues include H229, E230, H262, and E263.

It belongs to the deoxyhypusine hydroxylase family. Fe(2+) is required as a cofactor.

The protein localises to the cytoplasm. Its subcellular location is the nucleus. It catalyses the reaction [eIF5A protein]-deoxyhypusine + AH2 + O2 = [eIF5A protein]-hypusine + A + H2O. Its pathway is protein modification; eIF5A hypusination. In terms of biological role, catalyzes the hydroxylation of the N(6)-(4-aminobutyl)-L-lysine intermediate to form hypusine, an essential post-translational modification only found in mature eIF-5A factor. This Neurospora crassa (strain ATCC 24698 / 74-OR23-1A / CBS 708.71 / DSM 1257 / FGSC 987) protein is Deoxyhypusine hydroxylase (lia1).